Reading from the N-terminus, the 94-residue chain is Acylphosphatase (94 aa).

One can recognise an Acylphosphatase-like domain in the interval 3–90 (RVHVIVEGRV…SDEKQFRIMY (88 aa)). Active-site residues include Arg18 and Asn36.

This sequence belongs to the acylphosphatase family.

The enzyme catalyses an acyl phosphate + H2O = a carboxylate + phosphate + H(+). The protein is Acylphosphatase (acyP) of Geobacillus kaustophilus (strain HTA426).